A 384-amino-acid polypeptide reads, in one-letter code: MDDFKVTPWDVEGVVDYNKLIEQFGTSPLTDELIEKTAELTKSELPLFFRRRFFFSHRDYDKVLADYESGRGFFLYTGRGPSGPMHIGHIIPFFATKWLQENFDVNLYIQITDDEKFLFKEKLSFEDTKRWAYENILDIIAVGFDPDKTFIFQNSEFTKIYEMALPIAKKINFSMARAVFGFNEQSKIGMIFYPAIQAAPTFFEKKRCLIPAAIDQDPYWRLQRDFAESLGYYKTAAIHSKFVPGLTSLEGKMSASKPETAVYLTDDPEEAGKKIWKFALTGGQPTLKEQREKGGNPEKCVVFKWFEIFFEPDDEKLMERYRACKAGELTCGQCKRELIERVQKFLKEHQKKRKEAEKKVEKFKYTGELAQEQWDKAIPEPLRT.

A 'HIGH' region motif is present at residues Pro-81–His-89. The 'KMSKS' region motif lies at Lys-252 to Ser-256.

This sequence belongs to the class-I aminoacyl-tRNA synthetase family.

It localises to the cytoplasm. It catalyses the reaction tRNA(Trp) + L-tryptophan + ATP = L-tryptophyl-tRNA(Trp) + AMP + diphosphate + H(+). In Thermococcus kodakarensis (strain ATCC BAA-918 / JCM 12380 / KOD1) (Pyrococcus kodakaraensis (strain KOD1)), this protein is Tryptophan--tRNA ligase.